The sequence spans 552 residues: Chaperonin GroEL (552 aa).

ATP is bound by residues 30 to 33, K51, 87 to 91, G415, 480 to 482, and D496; these read TLGP, DGTTT, and NAA.

The protein belongs to the chaperonin (HSP60) family. In terms of assembly, forms a cylinder of 14 subunits composed of two heptameric rings stacked back-to-back. Interacts with the co-chaperonin GroES.

The protein localises to the cytoplasm. The enzyme catalyses ATP + H2O + a folded polypeptide = ADP + phosphate + an unfolded polypeptide.. Together with its co-chaperonin GroES, plays an essential role in assisting protein folding. The GroEL-GroES system forms a nano-cage that allows encapsulation of the non-native substrate proteins and provides a physical environment optimized to promote and accelerate protein folding. This chain is Chaperonin GroEL, found in Verminephrobacter eiseniae (strain EF01-2).